The following is a 164-amino-acid chain: Choriogonadotropin subunit beta (164 aa).

The first 20 residues, 1-20, serve as a signal peptide directing secretion; sequence MEMLQGLLLCLLLSTGGAWA. 6 cysteine pairs are disulfide-bonded: Cys-29–Cys-77, Cys-43–Cys-92, Cys-46–Cys-130, Cys-54–Cys-108, Cys-58–Cys-110, and Cys-113–Cys-120. The N-linked (GlcNAc...) asparagine glycan is linked to Asn-50. The interval 133–164 is disordered; the sequence is HTSQDSSSKDPPRNLTSPSQLPEPADAPLVPQ. O-linked (GalNAc...) serine glycosylation is present at Ser-140. The N-linked (GlcNAc...) asparagine glycan is linked to Asn-146. O-linked (GalNAc...) serine glycosylation occurs at Ser-151.

It belongs to the glycoprotein hormones subunit beta family. Heterodimer of a common alpha chain and a unique beta chain which confers biological specificity to thyrotropin, lutropin, follitropin and gonadotropin.

Its subcellular location is the secreted. In terms of biological role, stimulates the ovaries to synthesize the steroids that are essential for the maintenance of pregnancy. This chain is Choriogonadotropin subunit beta (CGB), found in Aotus nancymaae (Ma's night monkey).